Here is a 637-residue protein sequence, read N- to C-terminus: Phosphomethylpyrimidine synthase (637 aa).

Substrate is bound by residues Asn242, Met271, Tyr300, His336, 356–358 (SRG), 397–400 (DGLR), and Glu436. Zn(2+) is bound at residue His440. Tyr463 lines the substrate pocket. Residue His504 participates in Zn(2+) binding. [4Fe-4S] cluster contacts are provided by Cys584, Cys587, and Cys592.

The protein belongs to the ThiC family. As to quaternary structure, homodimer. The cofactor is [4Fe-4S] cluster.

It carries out the reaction 5-amino-1-(5-phospho-beta-D-ribosyl)imidazole + S-adenosyl-L-methionine = 4-amino-2-methyl-5-(phosphooxymethyl)pyrimidine + CO + 5'-deoxyadenosine + formate + L-methionine + 3 H(+). The protein operates within cofactor biosynthesis; thiamine diphosphate biosynthesis. Catalyzes the synthesis of the hydroxymethylpyrimidine phosphate (HMP-P) moiety of thiamine from aminoimidazole ribotide (AIR) in a radical S-adenosyl-L-methionine (SAM)-dependent reaction. The sequence is that of Phosphomethylpyrimidine synthase from Herminiimonas arsenicoxydans.